A 103-amino-acid polypeptide reads, in one-letter code: Large ribosomal subunit protein bL21 (103 aa).

Belongs to the bacterial ribosomal protein bL21 family. In terms of assembly, part of the 50S ribosomal subunit. Contacts protein L20.

In terms of biological role, this protein binds to 23S rRNA in the presence of protein L20. The protein is Large ribosomal subunit protein bL21 of Lactobacillus acidophilus (strain ATCC 700396 / NCK56 / N2 / NCFM).